We begin with the raw amino-acid sequence, 199 residues long: 7-methyl-GTP pyrophosphatase (199 aa).

Catalysis depends on Asp76, which acts as the Proton acceptor.

This sequence belongs to the Maf family. YceF subfamily. The cofactor is a divalent metal cation.

Its subcellular location is the cytoplasm. The enzyme catalyses N(7)-methyl-GTP + H2O = N(7)-methyl-GMP + diphosphate + H(+). Nucleoside triphosphate pyrophosphatase that hydrolyzes 7-methyl-GTP (m(7)GTP). May have a dual role in cell division arrest and in preventing the incorporation of modified nucleotides into cellular nucleic acids. The protein is 7-methyl-GTP pyrophosphatase of Rhizobium johnstonii (strain DSM 114642 / LMG 32736 / 3841) (Rhizobium leguminosarum bv. viciae).